The following is a 40-amino-acid chain: Antimicrobial peptide 2 (40 aa).

Residues 1–40 enclose the Chitin-binding type-1 domain; that stretch reads AQCGAQGGGATCPGGLCCSQWGWCGSTPKYCGAGCQSNCR. 4 cysteine pairs are disulfide-bonded: cysteine 3–cysteine 18, cysteine 12–cysteine 24, cysteine 17–cysteine 31, and cysteine 35–cysteine 39.

Post-translationally, not glycosylated.

Antimicrobial peptide active against plant pathogenic fungi and Gram-negative and -positive bacteria. This is Antimicrobial peptide 2 from Fagopyrum esculentum (Common buckwheat).